A 260-amino-acid polypeptide reads, in one-letter code: Small ribosomal subunit protein uS3 (260 aa).

The 76-residue stretch at 39-114 folds into the KH type-2 domain; sequence LRQYIEQKLG…QIRINVVEVQ (76 aa). Positions 219-260 are disordered; the sequence is EVAAPPPSTRDRDRDRGDRDREPRRRQQQRRRQQFEDRSNEG. 2 stretches are compositionally biased toward basic and acidic residues: residues 227-243 and 251-260; these read TRDR…EPRR and QQFEDRSNEG.

This sequence belongs to the universal ribosomal protein uS3 family. Part of the 30S ribosomal subunit. Forms a tight complex with proteins S10 and S14.

In terms of biological role, binds the lower part of the 30S subunit head. Binds mRNA in the 70S ribosome, positioning it for translation. This Trichormus variabilis (strain ATCC 29413 / PCC 7937) (Anabaena variabilis) protein is Small ribosomal subunit protein uS3.